A 597-amino-acid chain; its full sequence is U3 small nucleolar RNA-associated protein 6 homolog (597 aa).

5 HAT repeats span residues 121 to 153 (ATKTRLSKVFSAMLAIHSNKPALWIMAAKWEME), 156 to 188 (LSSESARQLFLRALRFHPECPKLYKEYFRMELM), 304 to 335 (RKEERCCAVYEEAVKTLPTEAMWKCYITFCLE), 488 to 520 (GGYKKARAVFKSLQESRPFSVDFFRKMIQFEKE), and 524 to 557 (CNMANIREYYERALREFGSADSDLWMDYMKEELN).

Belongs to the UTP6 family. In terms of assembly, part of the small subunit (SSU) processome, composed of more than 70 proteins and the RNA chaperone small nucleolar RNA (snoRNA) U3.

It localises to the nucleus. The protein localises to the nucleolus. Functionally, part of the small subunit (SSU) processome, first precursor of the small eukaryotic ribosomal subunit. During the assembly of the SSU processome in the nucleolus, many ribosome biogenesis factors, an RNA chaperone and ribosomal proteins associate with the nascent pre-rRNA and work in concert to generate RNA folding, modifications, rearrangements and cleavage as well as targeted degradation of pre-ribosomal RNA by the RNA exosome. Involved in nucleolar processing of pre-18S ribosomal RNA. The sequence is that of U3 small nucleolar RNA-associated protein 6 homolog from Homo sapiens (Human).